The chain runs to 572 residues: MRGIFLIRSRLSIFRAPAVKCLRFSNVLPSLSNNCIVRLYMEPPVACVLPLGLCSMFSTSIADSEQVGFTRSNIEKDDESDIDLGCSISDELVSEDVGKISKLVKDCGSDRKELRNKLEECDVKPSNELVVEILSRVRNDWETAFTFFVWAGKQQGYVRSVREYHSMISILGKMRKFDTAWTLIDEMRKFSPSLVNSQTLLIMIRKYCAVHDVGKAINTFHAYKRFKLEMGIDDFQSLLSALCRYKNVSDAGHLIFCNKDKYPFDAKSFNIVLNGWCNVIGSPREAERVWMEMGNVGVKHDVVSYSSMISCYSKGGSLNKVLKLFDRMKKECIEPDRKVYNAVVHALAKASFVSEARNLMKTMEEEKGIEPNVVTYNSLIKPLCKARKTEEAKQVFDEMLEKGLFPTIRTYHAFMRILRTGEEVFELLAKMRKMGCEPTVETYIMLIRKLCRWRDFDNVLLLWDEMKEKTVGPDLSSYIVMIHGLFLNGKIEEAYGYYKEMKDKGMRPNENVEDMIQSWFSGKQYAEQRITDSKGEVNKGAIVKKSEREKNFLQQPEVRKVVREHGYSFWDE.

The transit peptide at Met-1–Phe-57 directs the protein to the mitochondrion. PPR repeat units lie at residues Ser-160 to Leu-194, Asn-196 to Met-230, Gly-231 to Lys-261, Asp-265 to His-300, Asp-301 to Pro-335, Asp-336 to Pro-371, Asn-372 to Pro-406, His-412 to Pro-438, Thr-439 to Pro-473, and Asp-474 to Pro-508.

The protein belongs to the PPR family. P subfamily.

The protein localises to the mitochondrion. This chain is Pentatricopeptide repeat-containing protein At5g15010, mitochondrial, found in Arabidopsis thaliana (Mouse-ear cress).